The following is a 270-amino-acid chain: tRNA pseudouridine synthase A (270 aa).

The active-site Nucleophile is the Asp51. Tyr109 provides a ligand contact to substrate.

Belongs to the tRNA pseudouridine synthase TruA family. Homodimer.

It carries out the reaction uridine(38/39/40) in tRNA = pseudouridine(38/39/40) in tRNA. Its function is as follows. Formation of pseudouridine at positions 38, 39 and 40 in the anticodon stem and loop of transfer RNAs. The chain is tRNA pseudouridine synthase A from Burkholderia ambifaria (strain ATCC BAA-244 / DSM 16087 / CCUG 44356 / LMG 19182 / AMMD) (Burkholderia cepacia (strain AMMD)).